We begin with the raw amino-acid sequence, 187 residues long: Anterior gradient protein 1 (187 aa).

Positions 1–20 (MQTGLSLVCLVLLCSALGEA) are cleaved as a signal peptide.

This sequence belongs to the AGR family.

The protein localises to the secreted. Its function is as follows. Probably involved in cement gland formation. This is Anterior gradient protein 1 (ag1) from Xenopus tropicalis (Western clawed frog).